The chain runs to 336 residues: Polyadenylate-binding protein-interacting protein 12 (336 aa).

The disordered stretch occupies residues 14-47; sequence EAGGLISPSPPSSVTSQESGASSNNDHGGNGIHD. The span at 25-40 shows a compositional bias: polar residues; sequence SSVTSQESGASSNNDH. Positions 75-85 match the PAM2-like motif; it reads KLNPMAKEFIP. The Bipartite nuclear localization signal motif lies at 122–134; that stretch reads RRKKSFGQQGKRR. RRM domains follow at residues 150–225 and 247–323; these read RTVY…PSKT and RTIY…PSKT.

Interacts with MPC. Expressed in roots, leaves, stems, flowers and siliques. Detected in flowers only in growing organs: gynoecium, petals, stamenal filaments, anther walls and ovules.

The protein resides in the nucleus. Its function is as follows. Binds nucleotic acids in vitro. The chain is Polyadenylate-binding protein-interacting protein 12 (CID12) from Arabidopsis thaliana (Mouse-ear cress).